Here is a 347-residue protein sequence, read N- to C-terminus: Quinolinate synthase (347 aa).

The iminosuccinate site is built by His47 and Ser68. Position 113 (Cys113) interacts with [4Fe-4S] cluster. Iminosuccinate is bound by residues 139–141 and Ser156; that span reads YAN. Cys200 contacts [4Fe-4S] cluster. Iminosuccinate-binding positions include 226–228 and Thr243; that span reads HPE. Position 297 (Cys297) interacts with [4Fe-4S] cluster.

It belongs to the quinolinate synthase family. Type 1 subfamily. It depends on [4Fe-4S] cluster as a cofactor.

The protein resides in the cytoplasm. It carries out the reaction iminosuccinate + dihydroxyacetone phosphate = quinolinate + phosphate + 2 H2O + H(+). It participates in cofactor biosynthesis; NAD(+) biosynthesis; quinolinate from iminoaspartate: step 1/1. In terms of biological role, catalyzes the condensation of iminoaspartate with dihydroxyacetone phosphate to form quinolinate. The sequence is that of Quinolinate synthase from Salmonella typhi.